The primary structure comprises 672 residues: Spermatid perinuclear RNA-binding protein (672 aa).

Residues 5-363 (RSFANDDRHV…ALKRPFEDGL (359 aa)) form the DZF domain. Positions 349–371 (GAGSSALKRPFEDGLGDDKDPNK) are disordered. Residues 357-371 (RPFEDGLGDDKDPNK) are compositionally biased toward basic and acidic residues. One can recognise a DRBM 1 domain in the interval 387 to 453 (DLMNALMRLN…AVKVLQAMGY (67 aa)). Residues 467 to 476 (DEKSDNESKN) are compositionally biased toward basic and acidic residues. The tract at residues 467 to 514 (DEKSDNESKNDTVSSNSSNNTGNSTTETSSTLEVRTQGPILTASGKNP) is disordered. A compositionally biased stretch (low complexity) spans 477–497 (DTVSSNSSNNTGNSTTETSST). Residues 510–576 (SGKNPVMELN…ALAALEKLFS (67 aa)) form the DRBM 2 domain. Asymmetric dimethylarginine occurs at positions 612 and 617.

As to quaternary structure, interacts with EIF2AK2. Associates with microtubules; it is unsure whether such interaction is direct or indirect. Isoform 2 is expressed in spermatocytes (at protein level). Expressed in testis, thymus, ovary, liver, kidney, heart, spleen and brain. Expressed in cortex, dentate gyrus and Purkinje cell layer and granule cells of the cerebellum.

The protein localises to the cytoplasm. Its subcellular location is the cytoskeleton. Its function is as follows. Involved in spermatogenesis and sperm function. Plays a role in regulation of cell growth. Binds to double-stranded DNA and RNA. Binds most efficiently to poly(I:C) RNA than to poly(dI:dC) DNA. Also binds to single-stranded poly(G) RNA. Binds non-specifically to the mRNA PRM1 3'-UTR and adenovirus VA RNA. In Mus musculus (Mouse), this protein is Spermatid perinuclear RNA-binding protein (Strbp).